Reading from the N-terminus, the 496-residue chain is Germacrene A hydroxylase (496 aa).

Over 1–2 (ME) the chain is Cytoplasmic. A helical; Signal-anchor for type II membrane protein membrane pass occupies residues 3-23 (LTLTTSLGLAVFVFILFKLLT). Over 24–496 (GSKSTKNSLP…TAYKTANNSA (473 aa)) the chain is Lumenal. Position 432 (C432) interacts with heme. N-linked (GlcNAc...) asparagine glycosylation occurs at N493.

This sequence belongs to the cytochrome P450 family. It depends on heme as a cofactor.

The protein resides in the endoplasmic reticulum membrane. The catalysed reaction is (+)-(R)-germacrene A + 3 reduced [NADPH--hemoprotein reductase] + 3 O2 = germacra-1(10),4,11(13)-trien-12-oate + 3 oxidized [NADPH--hemoprotein reductase] + 4 H2O + 4 H(+). It participates in secondary metabolite biosynthesis; terpenoid biosynthesis. In terms of biological role, involved in the biosynthesis of germacrene-derived sesquiterpene lactones. Catalyzes three consecutive oxidations of germacrene A to produce germacrene A acid. Could also catalyze the three-step oxidation of non-natural substrate amorphadiene to artemisinic acid. In Barnadesia spinosa (Spiny barnadesia), this protein is Germacrene A hydroxylase.